The primary structure comprises 244 residues: NAD(P)H-hydrate epimerase (244 aa).

The YjeF N-terminal domain occupies 35 to 240; that stretch reads IREIDSLAME…SIGVPLELLR (206 aa). 82 to 86 provides a ligand contact to (6S)-NADPHX; that stretch reads NNGGD. K(+) is bound by residues Asn-83 and Asp-150. (6S)-NADPHX is bound by residues 154–160, Tyr-165, and Asp-183; that span reads GTGAKPP. Thr-186 is a binding site for K(+).

This sequence belongs to the NnrE/AIBP family. K(+) is required as a cofactor.

It carries out the reaction (6R)-NADHX = (6S)-NADHX. It catalyses the reaction (6R)-NADPHX = (6S)-NADPHX. Functionally, catalyzes the epimerization of the S- and R-forms of NAD(P)HX, a damaged form of NAD(P)H that is a result of enzymatic or heat-dependent hydration. This is a prerequisite for the S-specific NAD(P)H-hydrate dehydratase to allow the repair of both epimers of NAD(P)HX. This chain is NAD(P)H-hydrate epimerase, found in Rhodopirellula baltica (strain DSM 10527 / NCIMB 13988 / SH1).